The primary structure comprises 445 residues: UNC93-like protein MFSD11 (445 aa).

Residues 8-28 (LLNIIILGIGFMFMFTAFQTS) form a helical membrane-spanning segment. A glycan (N-linked (GlcNAc...) asparagine) is linked at Asn40. Helical transmembrane passes span 53–73 (AIIY…VAVI), 74–94 (GCQM…AMFI), 98–118 (TWSF…LWTA), and 138–158 (IFWA…YLAW). Asn163 carries an N-linked (GlcNAc...) asparagine glycan. Helical transmembrane passes span 170 to 190 (RTVF…FFLI), 239 to 259 (MLLL…YSGV), 277 to 297 (LIGL…GLFG), 309 to 329 (PVVI…YLYM), 345 to 365 (AFIN…GLGD), 385 to 405 (APAF…AFFY), and 415 to 435 (LLIL…VEWG).

The protein belongs to the unc-93 family.

Its subcellular location is the membrane. This Xenopus tropicalis (Western clawed frog) protein is UNC93-like protein MFSD11 (mfsd11).